The primary structure comprises 183 residues: Transmembrane protein 154 (183 aa).

Residues 1-22 (MQAPRAALVFALVIALVPVGRG) form the signal peptide. The Extracellular segment spans residues 23 to 75 (NYEELENSGDTTVESERPNKVTIPSTFAAVTIKETLNANINSTNFAPDENQLE). Residues 76-96 (FILMVLIPLILLVLLLLSVVF) traverse the membrane as a helical segment. The Cytoplasmic segment spans residues 97 to 183 (LATYYKRKRT…SNHNPSDSES (87 aa)). The tract at residues 163–183 (ECLPTLKEEKESNHNPSDSES) is disordered. Position 179 is a phosphoserine (S179).

Its subcellular location is the membrane. This is Transmembrane protein 154 (TMEM154) from Homo sapiens (Human).